A 131-amino-acid polypeptide reads, in one-letter code: Fumarate reductase subunit C (131 aa).

3 helical membrane-spanning segments follow: residues 30–50, 57–77, and 109–129; these read EGTAVPAVWFSIELIFGLFAL, WMGFVGFLQNPVVVILNLIAL, and IIKGLWVVTAVVTVVILYVAL.

It belongs to the FrdC family. Part of an enzyme complex containing four subunits: a flavoprotein (FrdA), an iron-sulfur protein (FrdB), and two hydrophobic anchor proteins (FrdC and FrdD).

Its subcellular location is the cell inner membrane. Functionally, two distinct, membrane-bound, FAD-containing enzymes are responsible for the catalysis of fumarate and succinate interconversion; fumarate reductase is used in anaerobic growth, and succinate dehydrogenase is used in aerobic growth. Anchors the catalytic components of the fumarate reductase complex to the cell inner membrane, binds quinones. This Citrobacter koseri (strain ATCC BAA-895 / CDC 4225-83 / SGSC4696) protein is Fumarate reductase subunit C.